Consider the following 1596-residue polypeptide: Cellulose synthase 2 (1596 aa).

Residues 1–749 form a catalytic region; that stretch reads MIYRAILKRL…RSARHGATAS (749 aa). Transmembrane regions (helical) follow at residues 25 to 45 and 106 to 126; these read SPFV…GVTI and LSLL…LSYF. The tract at residues 145–238 is catalytic subdomain A; sequence DWPVVDVYVP…YVVIFDCDHI (94 aa). Residue Asp-187 is part of the active site. Positions 234 and 236 each coordinate substrate. The segment at 315–375 is catalytic subdomain B; the sequence is SAVLGIGGFA…GQRVRWARGM (61 aa). Asp-331 is an active-site residue. The next 4 helical transmembrane spans lie at 396–416, 421–441, 505–525, and 544–564; these read LCYL…VFLA, FLFL…VYAF, FDLN…LALV, and FALN…SIAV. In terms of domain architecture, PilZ spans 570–669; it reads QIRHKPRVRA…ERQIVEFMFG (100 aa). Positions 750–1596 are cyclic di-GMP binding domain; sequence LIVLLGLPAA…RVKDTTDASH (847 aa). Disordered regions lie at residues 769-812 and 828-868; these read SRAT…IAPA and TGPA…APPI. The segment covering 783 to 809 has biased composition (pro residues); that stretch reads VEPPPVNAPPPPSLPQPPGTLPTPPQI. A helical transmembrane segment spans residues 1553–1573; that stretch reads LTLYVLGLVGAGLVAAAAVRL.

The protein in the N-terminal section; belongs to the glycosyltransferase 2 family. This sequence in the C-terminal section; belongs to the AcsB/BcsB family.

The protein resides in the cell inner membrane. The catalysed reaction is [(1-&gt;4)-beta-D-glucosyl](n) + UDP-alpha-D-glucose = [(1-&gt;4)-beta-D-glucosyl](n+1) + UDP + H(+). In Novacetimonas hansenii (Komagataeibacter hansenii), this protein is Cellulose synthase 2 (acsAII).